We begin with the raw amino-acid sequence, 235 residues long: Zein-alpha PMS1 (235 aa).

Positions 1 to 21 (MAAKIFCLLMLLGLSASAATA) are cleaved as a signal peptide.

This sequence belongs to the zein family.

In terms of biological role, zeins are major seed storage proteins. This chain is Zein-alpha PMS1 (ZMPMS1), found in Zea mays (Maize).